Reading from the N-terminus, the 62-residue chain is MDKNRIDGAAKQVKGSVKEAIGRVTGDKSTELEGAAEKNVGKVQRKAGEVADDVRDAVKSTK.

Belongs to the UPF0337 (CsbD) family.

In Xanthomonas axonopodis pv. citri (strain 306), this protein is UPF0337 protein XAC0100.